The primary structure comprises 313 residues: Ribosomal RNA small subunit methyltransferase H (313 aa).

S-adenosyl-L-methionine contacts are provided by residues 35 to 37 (GGH), D55, F79, D101, and Q108.

It belongs to the methyltransferase superfamily. RsmH family.

It is found in the cytoplasm. It carries out the reaction cytidine(1402) in 16S rRNA + S-adenosyl-L-methionine = N(4)-methylcytidine(1402) in 16S rRNA + S-adenosyl-L-homocysteine + H(+). Functionally, specifically methylates the N4 position of cytidine in position 1402 (C1402) of 16S rRNA. The polypeptide is Ribosomal RNA small subunit methyltransferase H (Edwardsiella ictaluri (strain 93-146)).